A 205-amino-acid polypeptide reads, in one-letter code: Holliday junction branch migration complex subunit RuvA (205 aa).

The interval 1 to 68 (MIGYLEGTLL…QPKPVLIGFN (68 aa)) is domain I. Positions 69–146 (TEEEKDFFHL…RFADAGHSSA (78 aa)) are domain II. The tract at residues 147–151 (PDVPV) is flexible linker. Residues 152 to 205 (TGSLADQTVEVLVGQLGYKPNEARLMVAGALKRNPDVSTPEALFDEIFKHGQAQ) form a domain III region.

It belongs to the RuvA family. As to quaternary structure, homotetramer. Forms an RuvA(8)-RuvB(12)-Holliday junction (HJ) complex. HJ DNA is sandwiched between 2 RuvA tetramers; dsDNA enters through RuvA and exits via RuvB. An RuvB hexamer assembles on each DNA strand where it exits the tetramer. Each RuvB hexamer is contacted by two RuvA subunits (via domain III) on 2 adjacent RuvB subunits; this complex drives branch migration. In the full resolvosome a probable DNA-RuvA(4)-RuvB(12)-RuvC(2) complex forms which resolves the HJ.

The protein resides in the cytoplasm. In terms of biological role, the RuvA-RuvB-RuvC complex processes Holliday junction (HJ) DNA during genetic recombination and DNA repair, while the RuvA-RuvB complex plays an important role in the rescue of blocked DNA replication forks via replication fork reversal (RFR). RuvA specifically binds to HJ cruciform DNA, conferring on it an open structure. The RuvB hexamer acts as an ATP-dependent pump, pulling dsDNA into and through the RuvAB complex. HJ branch migration allows RuvC to scan DNA until it finds its consensus sequence, where it cleaves and resolves the cruciform DNA. This Desulfosudis oleivorans (strain DSM 6200 / JCM 39069 / Hxd3) (Desulfococcus oleovorans) protein is Holliday junction branch migration complex subunit RuvA.